A 398-amino-acid polypeptide reads, in one-letter code: Succinate--CoA ligase [ADP-forming] subunit beta (398 aa).

The 229-residue stretch at 9 to 237 (RDLFETHGVP…AGGLDILELK (229 aa)) folds into the ATP-grasp domain. Residues lysine 45, 52–54 (GRG), alanine 94, and glutamate 99 contribute to the ATP site. Positions 191 and 205 each coordinate Mg(2+). Substrate contacts are provided by residues asparagine 257 and 319–321 (GIT).

Belongs to the succinate/malate CoA ligase beta subunit family. Heterotetramer of two alpha and two beta subunits. The cofactor is Mg(2+).

It catalyses the reaction succinate + ATP + CoA = succinyl-CoA + ADP + phosphate. The catalysed reaction is GTP + succinate + CoA = succinyl-CoA + GDP + phosphate. It participates in carbohydrate metabolism; tricarboxylic acid cycle; succinate from succinyl-CoA (ligase route): step 1/1. Functionally, succinyl-CoA synthetase functions in the citric acid cycle (TCA), coupling the hydrolysis of succinyl-CoA to the synthesis of either ATP or GTP and thus represents the only step of substrate-level phosphorylation in the TCA. The beta subunit provides nucleotide specificity of the enzyme and binds the substrate succinate, while the binding sites for coenzyme A and phosphate are found in the alpha subunit. The polypeptide is Succinate--CoA ligase [ADP-forming] subunit beta (Corynebacterium glutamicum (strain ATCC 13032 / DSM 20300 / JCM 1318 / BCRC 11384 / CCUG 27702 / LMG 3730 / NBRC 12168 / NCIMB 10025 / NRRL B-2784 / 534)).